Consider the following 366-residue polypeptide: Molybdenum import ATP-binding protein ModC (366 aa).

One can recognise an ABC transporter domain in the interval 1–231 (MSEVILQLQK…KAMRPWQSFS (231 aa)). 33–40 (GRSGAGKT) lines the ATP pocket. Residues 292–361 (ASSIRNILPA…IKGVSVAQRD (70 aa)) form the Mop domain.

Belongs to the ABC transporter superfamily. Molybdate importer (TC 3.A.1.8) family. The complex is composed of two ATP-binding proteins (ModC), two transmembrane proteins (ModB) and a solute-binding protein (ModA).

The protein localises to the cell inner membrane. The enzyme catalyses molybdate(out) + ATP + H2O = molybdate(in) + ADP + phosphate + H(+). Functionally, part of the ABC transporter complex ModABC involved in molybdenum import. Responsible for energy coupling to the transport system. The sequence is that of Molybdenum import ATP-binding protein ModC from Vibrio cholerae serotype O1 (strain ATCC 39315 / El Tor Inaba N16961).